A 417-amino-acid polypeptide reads, in one-letter code: MFRRLLIATLIGILAALAVAAFRHAMQLLEWIFLSNDTGSLVNAAEGLSPWRRLITPALGGLAAGLLLWGWQKMNQQRPHAPTDYMEALQTDGQFDVGASLVKSLASLLVVVSGSAIGREGAMILLAALAASSFARRFTPREEWKLWIASGAAAGMAGAYHAPLAGSLFIAEILFGTLMLASLGPVVVSAVVALLTTHLLNGSDSLLYTVHLTVDLHAREYVMIVSTGLVAGLCGPLLMWLMTASHNSFLRLKLSPPWQLALGGLIVGLLSLLTPTVWGNGYSVVQSFLLSPPLFSLIGGIFACKILAVLASSGSGAPGGVFTPTLFVGLSIGMFLGRIWGFWLPGSDEIAILLGLAGMATLLAATTHAPIMSTLMICEMTGEYQLLPGLLIACVVASVLSRTLRHDSIYRQHAAEH.

The next 10 helical transmembrane spans lie at 5 to 25 (LLIATLIGILAALAVAAFRHA), 54 to 74 (LITPALGGLAAGLLLWGWQKM), 146 to 166 (LWIASGAAAGMAGAYHAPLAG), 168 to 188 (LFIAEILFGTLMLASLGPVVV), 222 to 242 (VMIVSTGLVAGLCGPLLMWLM), 258 to 278 (WQLALGGLIVGLLSLLTPTVW), 288 to 308 (FLLSPPLFSLIGGIFACKILA), 316 to 336 (GAPGGVFTPTLFVGLSIGMFL), 349 to 371 (EIAILLGLAGMATLLAATTHAPI), and 380 to 400 (MTGEYQLLPGLLIACVVASVL).

Belongs to the chloride channel (TC 2.A.49) family. ClcB subfamily.

It localises to the cell inner membrane. Probably acts as an electrical shunt for an outwardly-directed proton pump that is linked to amino acid decarboxylation, as part of the extreme acid resistance (XAR) response. This is Voltage-gated ClC-type chloride channel ClcB from Salmonella dublin (strain CT_02021853).